Reading from the N-terminus, the 2156-residue chain is Oxygen-regulated protein 1 (2156 aa).

Residues 1–19 show a composition bias toward polar residues; it reads MSDTPSTGFSIIHPTSSEG. Residues 1 to 25 form a disordered region; sequence MSDTPSTGFSIIHPTSSEGQVPPPR. 2 consecutive Doublecortin domains span residues 36 to 118 and 154 to 233; these read KRIS…VDLD and RSLV…GNYD. Disordered stretches follow at residues 353–375, 666–686, 1438–1458, and 1590–1621; these read VSKT…RTES, SSVA…SRYQ, DMEE…MTSS, and DWSD…TQEK.

Interacts (via the doublecortin domains) with microtubules. Interacts with RP1L1. Interacts with MAK. As to expression, expressed in retina. Not expressed in heart, brain, placenta, lung, liver, skeletal muscle, kidney, spleen and pancreas.

It localises to the cytoplasm. The protein localises to the cytoskeleton. It is found in the cilium axoneme. Its subcellular location is the cell projection. The protein resides in the cilium. It localises to the photoreceptor outer segment. In terms of biological role, microtubule-associated protein regulating the stability and length of the microtubule-based axoneme of photoreceptors. Required for the differentiation of photoreceptor cells, it plays a role in the organization of the outer segment of rod and cone photoreceptors ensuring the correct orientation and higher-order stacking of outer segment disks along the photoreceptor axoneme. This is Oxygen-regulated protein 1 (RP1) from Homo sapiens (Human).